The following is a 455-amino-acid chain: Ribosomal protein uS12 methylthiotransferase RimO (455 aa).

The 111-residue stretch at 30-140 folds into the MTTase N-terminal domain; it reads PTIGMVSLGC…VLDAVHGAVP (111 aa). [4Fe-4S] cluster-binding residues include Cys39, Cys75, Cys104, Cys171, Cys175, and Cys178. The region spanning 157-386 is the Radical SAM core domain; the sequence is LTPRHFSYLK…MEKAQAISEV (230 aa). Residues 389–455 enclose the TRAM domain; it reads AAKVGRRIEV…GEYDIWGRPV (67 aa).

The protein belongs to the methylthiotransferase family. RimO subfamily. Requires [4Fe-4S] cluster as cofactor.

It localises to the cytoplasm. The catalysed reaction is L-aspartate(89)-[ribosomal protein uS12]-hydrogen + (sulfur carrier)-SH + AH2 + 2 S-adenosyl-L-methionine = 3-methylsulfanyl-L-aspartate(89)-[ribosomal protein uS12]-hydrogen + (sulfur carrier)-H + 5'-deoxyadenosine + L-methionine + A + S-adenosyl-L-homocysteine + 2 H(+). Catalyzes the methylthiolation of an aspartic acid residue of ribosomal protein uS12. In Cereibacter sphaeroides (strain ATCC 17023 / DSM 158 / JCM 6121 / CCUG 31486 / LMG 2827 / NBRC 12203 / NCIMB 8253 / ATH 2.4.1.) (Rhodobacter sphaeroides), this protein is Ribosomal protein uS12 methylthiotransferase RimO.